Here is a 1250-residue protein sequence, read N- to C-terminus: DNA-directed RNA polymerase subunit beta (1250 aa).

A disordered region spans residues 1215–1250; it reads QDLNDDDINPDDTIDAELDDNLFDDDFDDTFDDDDL.

The protein belongs to the RNA polymerase beta chain family. In terms of assembly, the RNAP catalytic core consists of 2 alpha, 1 beta, 1 beta' and 1 omega subunit. When a sigma factor is associated with the core the holoenzyme is formed, which can initiate transcription.

It carries out the reaction RNA(n) + a ribonucleoside 5'-triphosphate = RNA(n+1) + diphosphate. DNA-dependent RNA polymerase catalyzes the transcription of DNA into RNA using the four ribonucleoside triphosphates as substrates. This chain is DNA-directed RNA polymerase subunit beta, found in Acetivibrio thermocellus (strain ATCC 27405 / DSM 1237 / JCM 9322 / NBRC 103400 / NCIMB 10682 / NRRL B-4536 / VPI 7372) (Clostridium thermocellum).